Here is a 423-residue protein sequence, read N- to C-terminus: Imidazolonepropionase (423 aa).

H78 and H80 together coordinate Fe(3+). Zn(2+)-binding residues include H78 and H80. Residues R87, Y150, and H183 each coordinate 4-imidazolone-5-propanoate. Residue Y150 participates in N-formimidoyl-L-glutamate binding. H247 provides a ligand contact to Fe(3+). H247 contributes to the Zn(2+) binding site. Residue E250 coordinates 4-imidazolone-5-propanoate. D322 lines the Fe(3+) pocket. D322 contacts Zn(2+). Residues N324 and G326 each contribute to the N-formimidoyl-L-glutamate site. Residue S327 coordinates 4-imidazolone-5-propanoate.

This sequence belongs to the metallo-dependent hydrolases superfamily. HutI family. It depends on Zn(2+) as a cofactor. Requires Fe(3+) as cofactor.

Its subcellular location is the cytoplasm. The catalysed reaction is 4-imidazolone-5-propanoate + H2O = N-formimidoyl-L-glutamate. The protein operates within amino-acid degradation; L-histidine degradation into L-glutamate; N-formimidoyl-L-glutamate from L-histidine: step 3/3. In terms of biological role, catalyzes the hydrolytic cleavage of the carbon-nitrogen bond in imidazolone-5-propanoate to yield N-formimidoyl-L-glutamate. It is the third step in the universal histidine degradation pathway. The polypeptide is Imidazolonepropionase (Bacillus thuringiensis (strain Al Hakam)).